The sequence spans 1347 residues: DExH-box ATP-dependent RNA helicase DExH11 (1347 aa).

The interval Glu-263–Glu-291 is disordered. The span at Asp-267 to Ala-284 shows a compositional bias: basic and acidic residues. The 156-residue stretch at Ile-369 to Ile-524 folds into the Helicase ATP-binding domain. Ala-382–Thr-389 is an ATP binding site. The DEVH box signature appears at Asp-472–His-475. A disordered region spans residues Ser-566–Asn-625. Residues Asp-590 to Ser-601 show a composition bias toward basic and acidic residues. The 166-residue stretch at Asp-673–Leu-838 folds into the Helicase C-terminal domain.

The protein belongs to the DExH box helicase family. SKI2 subfamily. As to quaternary structure, component of the cytoplasmic SKI complex, which consists of SKI2, SKI3 and VIP3/SKI8. In terms of tissue distribution, expressed in vascular tissues of leaves and roots of young plants.

It localises to the cytoplasm. It carries out the reaction ATP + H2O = ADP + phosphate + H(+). In terms of biological role, component of the SKI complex which is thought to be involved in exosome-mediated RNA decay and associates with transcriptionally active genes in a manner dependent on PAF1 complex (PAF1C). Involved in the regulation of potassium deprivation stress response. This Arabidopsis thaliana (Mouse-ear cress) protein is DExH-box ATP-dependent RNA helicase DExH11.